Reading from the N-terminus, the 291-residue chain is ATP synthase gamma chain (291 aa).

It belongs to the ATPase gamma chain family. As to quaternary structure, F-type ATPases have 2 components, CF(1) - the catalytic core - and CF(0) - the membrane proton channel. CF(1) has five subunits: alpha(3), beta(3), gamma(1), delta(1), epsilon(1). CF(0) has three main subunits: a, b and c.

The protein resides in the cell inner membrane. Functionally, produces ATP from ADP in the presence of a proton gradient across the membrane. The gamma chain is believed to be important in regulating ATPase activity and the flow of protons through the CF(0) complex. This Chlorobium limicola (strain DSM 245 / NBRC 103803 / 6330) protein is ATP synthase gamma chain.